The chain runs to 318 residues: Ribosomal protein L11 methyltransferase (318 aa).

The S-adenosyl-L-methionine site is built by T161, G182, D204, and N247.

This sequence belongs to the methyltransferase superfamily. PrmA family.

The protein resides in the cytoplasm. It carries out the reaction L-lysyl-[protein] + 3 S-adenosyl-L-methionine = N(6),N(6),N(6)-trimethyl-L-lysyl-[protein] + 3 S-adenosyl-L-homocysteine + 3 H(+). Functionally, methylates ribosomal protein L11. The protein is Ribosomal protein L11 methyltransferase of Moorella thermoacetica (strain ATCC 39073 / JCM 9320).